The chain runs to 250 residues: Pyrroloquinoline-quinone synthase (250 aa).

It belongs to the PqqC family.

The catalysed reaction is 6-(2-amino-2-carboxyethyl)-7,8-dioxo-1,2,3,4,7,8-hexahydroquinoline-2,4-dicarboxylate + 3 O2 = pyrroloquinoline quinone + 2 H2O2 + 2 H2O + H(+). Its pathway is cofactor biosynthesis; pyrroloquinoline quinone biosynthesis. Its function is as follows. Ring cyclization and eight-electron oxidation of 3a-(2-amino-2-carboxyethyl)-4,5-dioxo-4,5,6,7,8,9-hexahydroquinoline-7,9-dicarboxylic-acid to PQQ. The chain is Pyrroloquinoline-quinone synthase from Pseudomonas aeruginosa (strain LESB58).